The primary structure comprises 400 residues: Acetate kinase (400 aa).

A Mg(2+)-binding site is contributed by Asn-10. An ATP-binding site is contributed by Lys-17. Arg-91 provides a ligand contact to substrate. Asp-150 acts as the Proton donor/acceptor in catalysis. Residues 210-214 (HLGNG), 285-287 (DCR), and 333-337 (GIGEN) contribute to the ATP site. Mg(2+) is bound at residue Glu-387.

The protein belongs to the acetokinase family. In terms of assembly, homodimer. Mg(2+) is required as a cofactor. The cofactor is Mn(2+).

The protein localises to the cytoplasm. It carries out the reaction acetate + ATP = acetyl phosphate + ADP. Its pathway is metabolic intermediate biosynthesis; acetyl-CoA biosynthesis; acetyl-CoA from acetate: step 1/2. Functionally, catalyzes the formation of acetyl phosphate from acetate and ATP. Can also catalyze the reverse reaction. The chain is Acetate kinase from Pectobacterium carotovorum subsp. carotovorum (strain PC1).